The sequence spans 514 residues: Transcription termination factor Rho (514 aa).

Residues 25 to 52 form a disordered region; it reads EPSSTPGPARNARRSNRRMRHPDKDVDK. Over residues 35 to 45 the composition is skewed to basic residues; sequence NARRSNRRMRH. The Rho RNA-BD domain occupies 141–216; sequence LMYGEGTLEI…LRIEAINHAD (76 aa). Residues 259–264, 271–276, and R302 each bind ATP; these read GFGQRG and RAGKTM.

This sequence belongs to the Rho family. In terms of assembly, homohexamer. The homohexamer assembles into an open ring structure.

Functionally, facilitates transcription termination by a mechanism that involves Rho binding to the nascent RNA, activation of Rho's RNA-dependent ATPase activity, and release of the mRNA from the DNA template. The sequence is that of Transcription termination factor Rho from Rhodopirellula baltica (strain DSM 10527 / NCIMB 13988 / SH1).